The following is a 93-amino-acid chain: Large ribosomal subunit protein uL23 (93 aa).

It belongs to the universal ribosomal protein uL23 family. Part of the 50S ribosomal subunit. Contacts protein L29, and trigger factor when it is bound to the ribosome.

Functionally, one of the early assembly proteins it binds 23S rRNA. One of the proteins that surrounds the polypeptide exit tunnel on the outside of the ribosome. Forms the main docking site for trigger factor binding to the ribosome. In Wolinella succinogenes (strain ATCC 29543 / DSM 1740 / CCUG 13145 / JCM 31913 / LMG 7466 / NCTC 11488 / FDC 602W) (Vibrio succinogenes), this protein is Large ribosomal subunit protein uL23.